We begin with the raw amino-acid sequence, 391 residues long: MAILNMQDLELQGKRVLIREDLNVPVKDGVVTSDARLRASLPTIKLALEKGAAVMVMSHLGRPTEGEFNAEFSMQPVVDYLTKALDCPVSLATEYLDGVEVAVGEVVVFENVRFNVGEKKNDEALAKKMAALCDVYVMDAFGTAHRAQASTHGVGLHAPIACAGPLLAGELAALGKALDNPARPMVAIVGGSKVSTKLTVLESLSTKVDQLVVGGGIANTFVAAAGHQVGKSLYEADLIEEAKRLVANAQSRGGDIPVPTDVVVASEFSPTATATLKDVSTVSDTDMIFDIGPDSAEALAEIIKNAGTVVWNGPVGVFEFDQFGEGTKRIAQAIAESNAFSIAGGGDTLAAVDKYGIADKVSYISTGGGAFLEFLEGKELPAVAMLESRGQ.

Residues 21-23 (DLN), arginine 36, 59-62 (HLGR), arginine 113, and arginine 146 each bind substrate. ATP-binding positions include lysine 197, glutamate 319, and 345–348 (GGDT).

It belongs to the phosphoglycerate kinase family. Monomer.

The protein resides in the cytoplasm. The catalysed reaction is (2R)-3-phosphoglycerate + ATP = (2R)-3-phospho-glyceroyl phosphate + ADP. The protein operates within carbohydrate degradation; glycolysis; pyruvate from D-glyceraldehyde 3-phosphate: step 2/5. The sequence is that of Phosphoglycerate kinase from Shewanella halifaxensis (strain HAW-EB4).